A 336-amino-acid polypeptide reads, in one-letter code: Probable allantoicase (336 aa).

The protein belongs to the allantoicase family.

The enzyme catalyses allantoate + H2O = (S)-ureidoglycolate + urea. Its pathway is nitrogen metabolism; (S)-allantoin degradation; (S)-ureidoglycolate from allantoate (aminidohydrolase route): step 1/1. The sequence is that of Probable allantoicase from Acinetobacter baumannii (strain AYE).